The primary structure comprises 48 residues: SDCTLRNHDCTDDRHSCCRSKMFKDVCTCFYPSQAKKELCTCQQPKHL.

Intrachain disulfides connect Cys-3/Cys-18, Cys-10/Cys-27, Cys-17/Cys-42, and Cys-29/Cys-40.

This sequence belongs to the neurotoxin 19 (CSTX) family. 12 subfamily. Heterodimer of A and B chains; disulfide-linked. Post-translationally, contains 4 disulfide bonds. In terms of tissue distribution, expressed by the venom gland.

The protein localises to the secreted. This Cupiennius salei (American wandering spider) protein is Toxin CSTX-15.